A 194-amino-acid chain; its full sequence is Putative 3-methyladenine DNA glycosylase (194 aa).

Belongs to the DNA glycosylase MPG family.

This is Putative 3-methyladenine DNA glycosylase from Chlamydia felis (strain Fe/C-56) (Chlamydophila felis).